The sequence spans 118 residues: Large ribosomal subunit protein bL19 (118 aa).

The protein belongs to the bacterial ribosomal protein bL19 family.

Its function is as follows. This protein is located at the 30S-50S ribosomal subunit interface and may play a role in the structure and function of the aminoacyl-tRNA binding site. The polypeptide is Large ribosomal subunit protein bL19 (Geotalea uraniireducens (strain Rf4) (Geobacter uraniireducens)).